We begin with the raw amino-acid sequence, 113 residues long: Gonadotropin subunit beta (113 aa).

Intrachain disulfides connect Cys6/Cys54, Cys20/Cys69, Cys23/Cys107, Cys31/Cys85, Cys35/Cys87, and Cys90/Cys97. Asn10 is a glycosylation site (N-linked (GlcNAc...) asparagine).

The protein belongs to the glycoprotein hormones subunit beta family. As to quaternary structure, heterodimer of an alpha and a beta chain.

The protein localises to the secreted. Functionally, involved in gametogenesis and steroidogenesis. In Muraenesox cinereus (Daggertooth pike conger), this protein is Gonadotropin subunit beta (cgb).